We begin with the raw amino-acid sequence, 237 residues long: Ribonuclease PH (237 aa).

Phosphate-binding positions include R86 and 124–126 (GTR).

The protein belongs to the RNase PH family. As to quaternary structure, homohexameric ring arranged as a trimer of dimers.

It carries out the reaction tRNA(n+1) + phosphate = tRNA(n) + a ribonucleoside 5'-diphosphate. Phosphorolytic 3'-5' exoribonuclease that plays an important role in tRNA 3'-end maturation. Removes nucleotide residues following the 3'-CCA terminus of tRNAs; can also add nucleotides to the ends of RNA molecules by using nucleoside diphosphates as substrates, but this may not be physiologically important. Probably plays a role in initiation of 16S rRNA degradation (leading to ribosome degradation) during starvation. The polypeptide is Ribonuclease PH (Shewanella baltica (strain OS223)).